A 313-amino-acid chain; its full sequence is Ribosomal RNA small subunit methyltransferase H (313 aa).

S-adenosyl-L-methionine-binding positions include 36–38, aspartate 56, phenylalanine 80, aspartate 102, and glutamine 109; that span reads GGH.

The protein belongs to the methyltransferase superfamily. RsmH family.

The protein localises to the cytoplasm. The enzyme catalyses cytidine(1402) in 16S rRNA + S-adenosyl-L-methionine = N(4)-methylcytidine(1402) in 16S rRNA + S-adenosyl-L-homocysteine + H(+). Specifically methylates the N4 position of cytidine in position 1402 (C1402) of 16S rRNA. In Actinobacillus pleuropneumoniae serotype 7 (strain AP76), this protein is Ribosomal RNA small subunit methyltransferase H.